We begin with the raw amino-acid sequence, 197 residues long: uncharacterized protein (197 aa).

It belongs to the NAD(P)H dehydrogenase (quinone) family.

This is an uncharacterized protein from Bacillus subtilis (strain 168).